A 105-amino-acid chain; its full sequence is Nucleoid-associated protein EAT1b_1710 (105 aa).

Residues 1-16 (MRGMGNMNNMMKQMQK) show a composition bias toward low complexity. The tract at residues 1–26 (MRGMGNMNNMMKQMQKMQKDMAKAQE) is disordered. A compositionally biased stretch (basic and acidic residues) spans 17-26 (MQKDMAKAQE).

Belongs to the YbaB/EbfC family. Homodimer.

The protein resides in the cytoplasm. The protein localises to the nucleoid. Its function is as follows. Binds to DNA and alters its conformation. May be involved in regulation of gene expression, nucleoid organization and DNA protection. The sequence is that of Nucleoid-associated protein EAT1b_1710 from Exiguobacterium sp. (strain ATCC BAA-1283 / AT1b).